The sequence spans 123 residues: WAP four-disulfide core domain protein 5 (123 aa).

An N-terminal signal peptide occupies residues 1 to 24 (MRTQSLLLLGALLAVGSQLPAVFG). WAP domains are found at residues 27 to 73 (KGEK…CVPR) and 74 to 121 (VSVK…RDPA). Intrachain disulfides connect C34–C62, C41–C66, C49–C61, C55–C70, C81–C109, C88–C113, C96–C108, and C102–C117.

The protein resides in the secreted. Functionally, putative acid-stable proteinase inhibitor. This chain is WAP four-disulfide core domain protein 5 (WFDC5), found in Pan troglodytes (Chimpanzee).